The primary structure comprises 302 residues: Sulfotransferase 1C4 (302 aa).

A 3'-phosphoadenylyl sulfate-binding site is contributed by 55–60 (KAGTTW). Residue 113–115 (KTH) coordinates substrate. Histidine 115 (proton acceptor) is an active-site residue. 3'-phosphoadenylyl sulfate-binding positions include arginine 137, serine 145, tyrosine 200, 234–239 (TSFDVM), and 262–266 (FMRKG).

Belongs to the sulfotransferase 1 family. Expressed at high levels in fetal lung and kidney and at low levels in fetal heart, adult kidney, ovary and spinal cord.

The protein localises to the cytoplasm. It localises to the cytosol. It catalyses the reaction a phenol + 3'-phosphoadenylyl sulfate = an aryl sulfate + adenosine 3',5'-bisphosphate + H(+). The catalysed reaction is 17beta-estradiol + 3'-phosphoadenylyl sulfate = 17beta-estradiol 3-sulfate + adenosine 3',5'-bisphosphate + H(+). It carries out the reaction bisphenol A + 3'-phosphoadenylyl sulfate = bisphenyl A sulfate + adenosine 3',5'-bisphosphate + H(+). Sulfotransferase that utilizes 3'-phospho-5'-adenylyl sulfate (PAPS) as sulfonate donor to catalyze the sulfate conjugation of phenolic compounds. Can also sulfonate estrogenic compounds, however, the dietary flavonoids (phytoestrogen) and environmental estrogens, like bisphenol A are better substrates than 17beta-estradiol (E2). Mediates the sulfation of doxorubicin and its analog epirubicin, two antitumor anthracyclines. This is Sulfotransferase 1C4 from Homo sapiens (Human).